The following is a 361-amino-acid chain: MLVSDFHFNLPDELIARYPKDERTASRLLHLNGESGKFSDLHFSDLLDHINPGDLLIFNNTRVIPARLYGRKESGGKLEVLIERVLDEHHCLAHIRCSKAPKAGTKLILGEDKLGIGNGLEATMISRHDTLFELRFNATTPLFTLLQQAGHIPLPPYIDRPDEDFDQERYQTVYSKVLGAVAAPTAGLHFDNPMLDKLKAKGVNMAFVTLHVGAGTFQPVRVENILEHNMHAEYAEVTQAVVDQILATKAAGKRVIAVGTTSVRSIESAAQATQPTGKLIAPFFSDTNIFLYPGKTFKIVDVLITNFHLPESTLIMLVSAFAGYRHTMNAYQHAVQQKYRFFSYGDAMLINKNPNALNDLP.

This sequence belongs to the QueA family. As to quaternary structure, monomer.

It localises to the cytoplasm. The enzyme catalyses 7-aminomethyl-7-carbaguanosine(34) in tRNA + S-adenosyl-L-methionine = epoxyqueuosine(34) in tRNA + adenine + L-methionine + 2 H(+). The protein operates within tRNA modification; tRNA-queuosine biosynthesis. In terms of biological role, transfers and isomerizes the ribose moiety from AdoMet to the 7-aminomethyl group of 7-deazaguanine (preQ1-tRNA) to give epoxyqueuosine (oQ-tRNA). This chain is S-adenosylmethionine:tRNA ribosyltransferase-isomerase, found in Haemophilus ducreyi (strain 35000HP / ATCC 700724).